A 589-amino-acid polypeptide reads, in one-letter code: Putative phospholipase B-like 2 (589 aa).

An N-terminal signal peptide occupies residues 1–41 (MVAPMYGSPGGRLARAVTRALALALVLALLVGLFLSGLTGA). Asn88 and Asn110 each carry an N-linked (GlcNAc...) asparagine glycan. Cys142 and Cys152 are disulfide-bonded. Residues Asn174, Asn231, Asn436, and Asn465 are each glycosylated (N-linked (GlcNAc...) asparagine). Cys492 and Cys495 are oxidised to a cystine. N-linked (GlcNAc...) asparagine glycosylation occurs at Asn515.

The protein belongs to the phospholipase B-like family. As to quaternary structure, interacts with IGF2R. In terms of processing, glycosylated; contains mannose 6-phosphate sugars.

The protein resides in the lysosome lumen. Functionally, putative phospholipase. This chain is Putative phospholipase B-like 2 (PLBD2), found in Bos taurus (Bovine).